Consider the following 429-residue polypeptide: Nicotinate phosphoribosyltransferase (429 aa).

Nicotinate contacts are provided by Y15, F177, and T229. H232 is modified (phosphohistidine; by autocatalysis). R294 provides a ligand contact to nicotinate. Residue T355 coordinates 5-phospho-alpha-D-ribose 1-diphosphate.

It belongs to the NAPRTase family. In terms of processing, transiently phosphorylated on a His residue during the reaction cycle. Phosphorylation strongly increases the affinity for substrates and increases the rate of nicotinate D-ribonucleotide production. Dephosphorylation regenerates the low-affinity form of the enzyme, leading to product release.

The protein resides in the cytoplasm. It localises to the nucleus. The catalysed reaction is nicotinate + 5-phospho-alpha-D-ribose 1-diphosphate + ATP + H2O = nicotinate beta-D-ribonucleotide + ADP + phosphate + diphosphate. Its pathway is cofactor biosynthesis; NAD(+) biosynthesis; nicotinate D-ribonucleotide from nicotinate: step 1/1. In terms of biological role, catalyzes the first step in the biosynthesis of NAD from nicotinic acid, the ATP-dependent synthesis of beta-nicotinate D-ribonucleotide from nicotinate and 5-phospho-D-ribose 1-phosphate. Essential for growth under anaerobic conditions. The protein is Nicotinate phosphoribosyltransferase (NPT1) of Saccharomyces cerevisiae (strain ATCC 204508 / S288c) (Baker's yeast).